The primary structure comprises 156 residues: AP-1 complex subunit sigma-1 (156 aa).

Belongs to the adaptor complexes small subunit family. In terms of assembly, adaptor protein complex 1 (AP-1) is a heterotetramer composed of two large adaptins (gamma-type subunit and beta-type subunit), a medium adaptin (mu-type subunit) and a small adaptin (sigma-type subunit).

It is found in the golgi apparatus. It localises to the trans-Golgi network. The protein resides in the cytoplasmic vesicle. The protein localises to the clathrin-coated vesicle membrane. Its function is as follows. Subunit of clathrin-associated adaptor protein complex 1 that plays a role in protein sorting in the trans-Golgi network (TGN) and endosomes. The AP complexes mediate the recruitment of clathrin to membranes and the recognition of sorting signals within the cytosolic tails of transmembrane cargo molecules. Also involved in early steps of phagocytosis and macropinocytosis. The sequence is that of AP-1 complex subunit sigma-1 (ap1s1) from Dictyostelium discoideum (Social amoeba).